The sequence spans 286 residues: 4-diphosphocytidyl-2-C-methyl-D-erythritol kinase (286 aa).

Lysine 11 is a catalytic residue. 94–104 (PMGGGIGGGSS) contributes to the ATP binding site. The active site involves aspartate 136.

This sequence belongs to the GHMP kinase family. IspE subfamily.

It catalyses the reaction 4-CDP-2-C-methyl-D-erythritol + ATP = 4-CDP-2-C-methyl-D-erythritol 2-phosphate + ADP + H(+). The protein operates within isoprenoid biosynthesis; isopentenyl diphosphate biosynthesis via DXP pathway; isopentenyl diphosphate from 1-deoxy-D-xylulose 5-phosphate: step 3/6. Its function is as follows. Catalyzes the phosphorylation of the position 2 hydroxy group of 4-diphosphocytidyl-2C-methyl-D-erythritol. This Pseudomonas putida (strain GB-1) protein is 4-diphosphocytidyl-2-C-methyl-D-erythritol kinase.